A 444-amino-acid chain; its full sequence is Cytokine receptor-like factor 3 (444 aa).

Residues 1–65 are a coiled coil; sequence MSIEAEALLQ…QELQTAVSRL (65 aa). Residues 177-270 enclose the Fibronectin type-III domain; that stretch reads PPVQIEELVE…PQTGYTTLAP (94 aa).

The protein belongs to the cytokine receptor-like factor 3 family.

It is found in the cytoplasm. May play a role in the negative regulation of cell cycle progression. The chain is Cytokine receptor-like factor 3 (crlf3) from Danio rerio (Zebrafish).